The chain runs to 887 residues: Transportin-2 (887 aa).

HEAT repeat units lie at residues 9-36 (GLQQ…DKLK), 41-79 (FPDF…AHYQ), 88-121 (FIKQ…KGEL), 127-164 (LLPQ…LDSD), 171-201 (NIMI…QFIM), 214-241 (FIEH…VMLL), 253-280 (HSII…FWLT), 296-386 (VQLI…LANV), 394-422 (HLLP…GAIA), 434-461 (PELI…TLSR), 475-508 (LKPL…EEEA), 516-549 (LSYI…ADSV), 557-595 (EYIQ…TALQ), 603-654 (EPVY…GLGG), 665-696 (IMTL…KACF), 704-737 (AEFM…MQMG), 745-780 (QMVL…YVCP), 788-821 (QQFI…IGVN), 830-861 (IFFC…KDQV), and 864-884 (ENWQ…LAAF). One can recognise an Importin N-terminal domain in the interval 31–99 (VQDKLKQLNQ…KQECLNNIGD (69 aa)). Residues 344-363 (TLTHEAERPDSSEDAEDDDD) are disordered. Lysine 852 bears the N6-acetyllysine mark.

The protein belongs to the importin beta family. Importin beta-2 subfamily.

The protein resides in the cytoplasm. It localises to the nucleus. In terms of biological role, probably functions in nuclear protein import as nuclear transport receptor. Serves as receptor for nuclear localization signals (NLS) in cargo substrates. Is thought to mediate docking of the importin/substrate complex to the nuclear pore complex (NPC) through binding to nucleoporin and the complex is subsequently translocated through the pore by an energy requiring, Ran-dependent mechanism. At the nucleoplasmic side of the NPC, Ran binds to the importin, the importin/substrate complex dissociates and importin is re-exported from the nucleus to the cytoplasm where GTP hydrolysis releases Ran. The directionality of nuclear import is thought to be conferred by an asymmetric distribution of the GTP- and GDP-bound forms of Ran between the cytoplasm and nucleus. The protein is Transportin-2 (Tnpo2) of Mus musculus (Mouse).